The primary structure comprises 357 residues: DNA replication and repair protein RecF (357 aa).

30 to 37 (GANGSGKT) serves as a coordination point for ATP.

This sequence belongs to the RecF family.

It is found in the cytoplasm. In terms of biological role, the RecF protein is involved in DNA metabolism; it is required for DNA replication and normal SOS inducibility. RecF binds preferentially to single-stranded, linear DNA. It also seems to bind ATP. This Escherichia coli O7:K1 (strain IAI39 / ExPEC) protein is DNA replication and repair protein RecF.